A 373-amino-acid polypeptide reads, in one-letter code: Zinc finger protein CONSTANS-LIKE 10 (373 aa).

Zn(2+)-binding residues include Cys-5, Cys-8, Cys-28, His-33, Cys-48, Cys-51, Cys-71, and His-76. The segment at 5–47 (CDFCGEQRSMVYCRSDAACLCLSCDRNVHSANALSKRHSRTLV) adopts a B box-type 1; atypical zinc-finger fold. The segment at 48–92 (CERCNAQPASVRCSDERVSLCQNCDWSGHDGKNSTTTSHHKRQTI) adopts a B box-type 2; atypical zinc-finger fold. The interval 152–172 (PETSSAAQGMDHSSVPENSSM) is disordered. The CCT domain maps to 316-358 (RNNAVMRYKEKKKARKFDKRVRYVSRKERADVRRRVKGRFVKS).

Belongs to the CONSTANS family.

The protein localises to the nucleus. The polypeptide is Zinc finger protein CONSTANS-LIKE 10 (COL10) (Arabidopsis thaliana (Mouse-ear cress)).